The primary structure comprises 448 residues: Glutamyl-tRNA reductase 2 (448 aa).

Substrate contacts are provided by residues 50 to 53 (TCER), Ser109, 114 to 116 (ESD), and Gln120. Cys51 functions as the Nucleophile in the catalytic mechanism. 190–195 (GTGQVA) is a binding site for NADP(+). A disordered region spans residues 423–448 (DQAVPAYSPQPIGNTSNAAASATPRR). A compositionally biased stretch (polar residues) spans 433-442 (PIGNTSNAAA).

The protein belongs to the glutamyl-tRNA reductase family. In terms of assembly, homodimer.

It carries out the reaction (S)-4-amino-5-oxopentanoate + tRNA(Glu) + NADP(+) = L-glutamyl-tRNA(Glu) + NADPH + H(+). It functions in the pathway porphyrin-containing compound metabolism; protoporphyrin-IX biosynthesis; 5-aminolevulinate from L-glutamyl-tRNA(Glu): step 1/2. Its function is as follows. Catalyzes the NADPH-dependent reduction of glutamyl-tRNA(Glu) to glutamate 1-semialdehyde (GSA). The sequence is that of Glutamyl-tRNA reductase 2 from Nocardioides sp. (strain ATCC BAA-499 / JS614).